A 452-amino-acid chain; its full sequence is MREIVHIQTGQCGNQIGTKFWEIISDEHGIQPTGEYTTGVEKDLMELQLERINVYYNEGNQGKYVPRAVLVDLEPGTMDSVRAGPHGQLFKPDSFVFGQSGAGNNWAKGHYTEGAELVDSVLDVVRKKSEKCDCLQGFQLTHSLGGVTGSGMGTLLVSKILEEFPDRIMVTFSVVPSPKVSDTVVEPYNATLSIHQLVENTDETYCIDNEALYDICFRTLKLQNPTYGDLNHLVSLTMSGVTTCLRFPGQLNADLRKLAVNMVPFPRLHFFMPGFAPLTARGSQQYRALTVPELTQQMFDAKNMMAACDPRHGRYLTVAAIFRGRMSMREVDDQMYNIQNKNSSFFVEWIPNNVKTAVCDIPPRGLKMSATFIGNSTAIQELFKRVSEQFTAMFRRKAFLHWYTGEGMDEMEFTEAESNMNDLVSEYQQYQEATADDEAEFEEEGEVEGEYD.

Gln11, Glu74, Ser143, Val147, Thr148, Gly149, Asn209, and Asn231 together coordinate GTP. Residue Glu74 coordinates Mg(2+). Residues 431 to 452 are disordered; the sequence is QEATADDEAEFEEEGEVEGEYD. Residues 434 to 452 are compositionally biased toward acidic residues; that stretch reads TADDEAEFEEEGEVEGEYD.

It belongs to the tubulin family. As to quaternary structure, dimer of alpha and beta chains. A typical microtubule is a hollow water-filled tube with an outer diameter of 25 nm and an inner diameter of 15 nM. Alpha-beta heterodimers associate head-to-tail to form protofilaments running lengthwise along the microtubule wall with the beta-tubulin subunit facing the microtubule plus end conferring a structural polarity. Microtubules usually have 13 protofilaments but different protofilament numbers can be found in some organisms and specialized cells. Mg(2+) serves as cofactor.

It is found in the cytoplasm. The protein localises to the cytoskeleton. Functionally, tubulin is the major constituent of microtubules, a cylinder consisting of laterally associated linear protofilaments composed of alpha- and beta-tubulin heterodimers. Microtubules grow by the addition of GTP-tubulin dimers to the microtubule end, where a stabilizing cap forms. Below the cap, tubulin dimers are in GDP-bound state, owing to GTPase activity of alpha-tubulin. This is Tubulin beta-2 chain from Homarus americanus (American lobster).